The following is a 292-amino-acid chain: Aspartate carbamoyltransferase catalytic subunit (292 aa).

Carbamoyl phosphate-binding residues include Arg50 and Thr51. Lys78 is a binding site for L-aspartate. Residues Arg100, His128, and Gln131 each contribute to the carbamoyl phosphate site. Positions 161 and 211 each coordinate L-aspartate. Gly250 and Pro251 together coordinate carbamoyl phosphate.

It belongs to the aspartate/ornithine carbamoyltransferase superfamily. ATCase family. As to quaternary structure, heterododecamer (2C3:3R2) of six catalytic PyrB chains organized as two trimers (C3), and six regulatory PyrI chains organized as three dimers (R2).

It carries out the reaction carbamoyl phosphate + L-aspartate = N-carbamoyl-L-aspartate + phosphate + H(+). Its pathway is pyrimidine metabolism; UMP biosynthesis via de novo pathway; (S)-dihydroorotate from bicarbonate: step 2/3. Functionally, catalyzes the condensation of carbamoyl phosphate and aspartate to form carbamoyl aspartate and inorganic phosphate, the committed step in the de novo pyrimidine nucleotide biosynthesis pathway. In Nitratiruptor sp. (strain SB155-2), this protein is Aspartate carbamoyltransferase catalytic subunit.